Reading from the N-terminus, the 477-residue chain is Interferon gamma receptor 1 (477 aa).

The N-terminal stretch at 1-25 is a signal peptide; it reads MGPQAAAGRMILLVVLMLSAKVGSG. Residues 26 to 254 lie on the Extracellular side of the membrane; that stretch reads ALTSTEDPEP…PPFHDDRKDS (229 aa). 2 N-linked (GlcNAc...) asparagine glycosylation sites follow: Asn-61 and Asn-85. Cystine bridges form between Cys-83–Cys-91, Cys-128–Cys-174, Cys-203–Cys-208, and Cys-222–Cys-243. Residues 255 to 275 traverse the membrane as a helical segment; sequence IWILVVAPLTVFTVVILVFAY. Over 276–477 the chain is Cytoplasmic; the sequence is WYTKKNSFKR…RLTGEAQELS (202 aa). Disordered stretches follow at residues 335–386 and 402–446; these read TVTA…LSSN and SDSG…SGYD. At Ser-362 the chain carries Phosphoserine. Thr-367 is subject to Phosphothreonine. Ser-370 is subject to Phosphoserine. Phosphothreonine is present on residues Thr-373 and Thr-375. Polar residues predominate over residues 375 to 386; sequence TQRRSFSLLSSN. 2 positions are modified to phosphoserine: Ser-379 and Ser-402. Residues 402–416 show a composition bias toward low complexity; the sequence is SDSGLVGSGSSISDL. Tyr-445 carries the phosphotyrosine modification.

This sequence belongs to the type II cytokine receptor family. In terms of assembly, monomer. Heterodimer with IFNGR2, to form the IFNG receptor complex. Interacts with JAK1. Interacts (when phosphorylated) with STAT1. Interacts with SOCS1. In terms of processing, phosphorylated at Ser/Thr residues. Phosphorylation of Tyr-445 is required for IFNG receptor signal transduction. Influenza virus infection leads to phosphorylation in a CSNK1A1-dependent manner. Post-translationally, ubiquitinated after phosphorylation in a CSNK1A1-dependent manner, leading to the lysosome-dependent degradation. Proteasomally degraded through 'Lys-48'-mediated ubiquitination. Ubiquitination is necessary for efficient IFNGR1 signaling.

The protein localises to the cell membrane. In terms of biological role, receptor subunit for interferon gamma/INFG that plays crucial roles in antimicrobial, antiviral, and antitumor responses by activating effector immune cells and enhancing antigen presentation (, PubMed:20926559, PubMed:27286456). Associates with transmembrane accessory factor IFNGR2 to form a functional receptor. Upon ligand binding, the intracellular domain of IFNGR1 opens out to allow association of downstream signaling components JAK1 and JAK2. In turn, activated JAK1 phosphorylates IFNGR1 to form a docking site for STAT1. Subsequent phosphorylation of STAT1 leads to its dimerization, translocation to the nucleus, and stimulation of target gene transcription. STAT3 can also be activated in a similar manner although activation seems weaker. IFNGR1 intracellular domain phosphorylation also provides a docking site for SOCS1 that regulates the JAK-STAT pathway by competing with STAT1 binding to IFNGR1. This is Interferon gamma receptor 1 from Mus musculus (Mouse).